The chain runs to 248 residues: ATP synthase subunit a, chloroplastic (248 aa).

The next 5 membrane-spanning stretches (helical) occupy residues 37–57 (AQVL…SIVA), 96–116 (VPFI…GALF), 135–155 (INTT…AGLH), 200–220 (LVVA…MMFL), and 221–241 (GLFT…AYIG).

This sequence belongs to the ATPase A chain family. F-type ATPases have 2 components, CF(1) - the catalytic core - and CF(0) - the membrane proton channel. CF(1) has five subunits: alpha(3), beta(3), gamma(1), delta(1), epsilon(1). CF(0) has four main subunits: a, b, b' and c.

The protein localises to the plastid. Its subcellular location is the chloroplast thylakoid membrane. In terms of biological role, key component of the proton channel; it plays a direct role in the translocation of protons across the membrane. This is ATP synthase subunit a, chloroplastic from Angiopteris evecta (Mule's foot fern).